The chain runs to 269 residues: Surfeit locus protein 4 (269 aa).

5 helical membrane passes run 64–84 (LLAS…CILV), 92–112 (YACF…SILW), 179–199 (FFSI…AIGF), 203–223 (LAAL…NAFW), and 239–259 (FFQT…GPGG). The short motif at 266–269 (KKEW) is the Di-lysine motif element.

It belongs to the SURF4 family. As to quaternary structure, found in a complex composed at least of SURF4, TMED2 and TMED10. May interact with LMAN1. Interacts with ZFYVE27 and with KIF5A in a ZFYVE27-dependent manner. Interacts with STING1. Interacts with SAR1B. Interacts with TMEM41B.

Its subcellular location is the endoplasmic reticulum membrane. It localises to the endoplasmic reticulum-Golgi intermediate compartment membrane. It is found in the golgi apparatus membrane. Endoplasmic reticulum cargo receptor that mediates the export of lipoproteins by recruiting cargos into COPII vesicles to facilitate their secretion. Acts as a cargo receptor for lipoproteins bearing both APOB and APOA1, thereby regulating lipoprotein delivery and the maintenance of lipid homeostasis. Synergizes with the GTPase SAR1B to mediate transport of circulating lipoproteins. Promotes the secretion of PCSK9. Also mediates the efficient secretion of erythropoietin (EPO). May also play a role in the maintenance of the architecture of the endoplasmic reticulum-Golgi intermediate compartment and of the Golgi. The polypeptide is Surfeit locus protein 4 (Bos taurus (Bovine)).